We begin with the raw amino-acid sequence, 334 residues long: Holliday junction branch migration complex subunit RuvB (334 aa).

Residues 1-179 are large ATPase domain (RuvB-L); the sequence is MTHKISVLHQ…FAFTGRVDYY (179 aa). ATP is bound by residues Leu-18, Arg-19, Gly-60, Lys-63, Thr-64, Ser-65, 126–128, Arg-169, Tyr-179, and Arg-216; that span reads EDF. Position 64 (Thr-64) interacts with Mg(2+). The segment at 180–250 is small ATPAse domain (RuvB-S); the sequence is TDEDLVSILS…VAEKALAMLL (71 aa). The segment at 253–334 is head domain (RuvB-H); it reads NLGLNEIDIK…RNPKDRWGEE (82 aa). The DNA site is built by Arg-308 and Arg-313.

This sequence belongs to the RuvB family. As to quaternary structure, homohexamer. Forms an RuvA(8)-RuvB(12)-Holliday junction (HJ) complex. HJ DNA is sandwiched between 2 RuvA tetramers; dsDNA enters through RuvA and exits via RuvB. An RuvB hexamer assembles on each DNA strand where it exits the tetramer. Each RuvB hexamer is contacted by two RuvA subunits (via domain III) on 2 adjacent RuvB subunits; this complex drives branch migration. In the full resolvosome a probable DNA-RuvA(4)-RuvB(12)-RuvC(2) complex forms which resolves the HJ.

The protein resides in the cytoplasm. The catalysed reaction is ATP + H2O = ADP + phosphate + H(+). Functionally, the RuvA-RuvB-RuvC complex processes Holliday junction (HJ) DNA during genetic recombination and DNA repair, while the RuvA-RuvB complex plays an important role in the rescue of blocked DNA replication forks via replication fork reversal (RFR). RuvA specifically binds to HJ cruciform DNA, conferring on it an open structure. The RuvB hexamer acts as an ATP-dependent pump, pulling dsDNA into and through the RuvAB complex. RuvB forms 2 homohexamers on either side of HJ DNA bound by 1 or 2 RuvA tetramers; 4 subunits per hexamer contact DNA at a time. Coordinated motions by a converter formed by DNA-disengaged RuvB subunits stimulates ATP hydrolysis and nucleotide exchange. Immobilization of the converter enables RuvB to convert the ATP-contained energy into a lever motion, pulling 2 nucleotides of DNA out of the RuvA tetramer per ATP hydrolyzed, thus driving DNA branch migration. The RuvB motors rotate together with the DNA substrate, which together with the progressing nucleotide cycle form the mechanistic basis for DNA recombination by continuous HJ branch migration. Branch migration allows RuvC to scan DNA until it finds its consensus sequence, where it cleaves and resolves cruciform DNA. The protein is Holliday junction branch migration complex subunit RuvB of Chlamydia trachomatis serovar A (strain ATCC VR-571B / DSM 19440 / HAR-13).